A 250-amino-acid polypeptide reads, in one-letter code: Troponin I 1 (250 aa).

Disordered regions lie at residues 1 to 59 (MSQI…ERKK) and 194 to 250 (SVFT…ADEE). 2 stretches are compositionally biased toward basic and acidic residues: residues 21-45 (DAQR…EAGQ) and 206-221 (DKPE…KEES). The span at 229–250 (PVEEEETAASEGEEEEEEADEE) shows a compositional bias: acidic residues.

It belongs to the troponin I family. Strongly expressed in body wall muscle during embryogenesis, reduces during the larval stages to adult. In late-stage larvae and adults, expression is evident in the proximal gonad of both hermaphrodites and males.

Its function is as follows. Troponin I is the inhibitory subunit of troponin, the thin filament regulatory complex which confers calcium-sensitivity to muscle actomyosin ATPase activity. The protein is Troponin I 1 (tni-1) of Caenorhabditis elegans.